Consider the following 341-residue polypeptide: L-threonine 3-dehydrogenase (341 aa).

Cys-38 is a binding site for Zn(2+). Active-site charge relay system residues include Thr-40 and His-43. Zn(2+) is bound by residues His-63, Glu-64, Cys-93, Cys-96, Cys-99, and Cys-107. NAD(+) contacts are provided by residues Ile-175, Asp-195, Arg-200, 262 to 264 (LGI), and 286 to 287 (IY).

Belongs to the zinc-containing alcohol dehydrogenase family. As to quaternary structure, homotetramer. Zn(2+) is required as a cofactor.

The protein localises to the cytoplasm. The enzyme catalyses L-threonine + NAD(+) = (2S)-2-amino-3-oxobutanoate + NADH + H(+). Its pathway is amino-acid degradation; L-threonine degradation via oxydo-reductase pathway; glycine from L-threonine: step 1/2. Functionally, catalyzes the NAD(+)-dependent oxidation of L-threonine to 2-amino-3-ketobutyrate. The chain is L-threonine 3-dehydrogenase from Salmonella arizonae (strain ATCC BAA-731 / CDC346-86 / RSK2980).